A 115-amino-acid polypeptide reads, in one-letter code: Nitrogenase-stabilizing/protective protein NifW (115 aa).

Belongs to the NifW family. As to quaternary structure, homotrimer; associates with NifD.

Its function is as follows. May protect the nitrogenase Fe-Mo protein from oxidative damage. The protein is Nitrogenase-stabilizing/protective protein NifW of Rhodopseudomonas palustris (strain BisB18).